The chain runs to 206 residues: Adenine phosphoribosyltransferase (206 aa).

Belongs to the purine/pyrimidine phosphoribosyltransferase family. Homodimer.

The protein resides in the cytoplasm. The catalysed reaction is AMP + diphosphate = 5-phospho-alpha-D-ribose 1-diphosphate + adenine. The protein operates within purine metabolism; AMP biosynthesis via salvage pathway; AMP from adenine: step 1/1. In terms of biological role, catalyzes a salvage reaction resulting in the formation of AMP, that is energically less costly than de novo synthesis. The polypeptide is Adenine phosphoribosyltransferase (Rhodopirellula baltica (strain DSM 10527 / NCIMB 13988 / SH1)).